The sequence spans 317 residues: Large ribosomal subunit protein uL10 (317 aa).

Positions 280-290 are enriched in low complexity; it reads SASAAPAAGGA. A disordered region spans residues 280–317; that stretch reads SASAAPAAGGATEKKEEAKKPESESEEEDDDMGFGLFD. Residues 291–302 are compositionally biased toward basic and acidic residues; sequence TEKKEEAKKPES. A Phosphoserine modification is found at serine 302. Serine 304 is modified (phosphoserine; by CK1).

This sequence belongs to the universal ribosomal protein uL10 family. P0 forms a pentameric complex by interaction with dimers of P1 and P2.

Its subcellular location is the cytoplasm. The protein resides in the nucleus. Functionally, ribosomal protein P0 is the functional equivalent of E.coli protein L10. The chain is Large ribosomal subunit protein uL10 (RpLP0) from Drosophila melanogaster (Fruit fly).